The chain runs to 325 residues: Xylosidase/arabinosidase (325 aa).

Catalysis depends on aspartate 16, which acts as the Proton acceptor. The active-site Proton donor is the glutamate 224.

Belongs to the glycosyl hydrolase 43 family.

It catalyses the reaction Hydrolysis of (1-&gt;4)-beta-D-xylans, to remove successive D-xylose residues from the non-reducing termini.. The enzyme catalyses Hydrolysis of terminal non-reducing alpha-L-arabinofuranoside residues in alpha-L-arabinosides.. In Bacteroides ovatus, this protein is Xylosidase/arabinosidase (xsa).